We begin with the raw amino-acid sequence, 505 residues long: Deoxyguanosinetriphosphate triphosphohydrolase (505 aa).

One can recognise an HD domain in the interval 66 to 273 (RLTHSMEVQQ…MEAADDISYC (208 aa)).

Belongs to the dGTPase family. Type 1 subfamily. As to quaternary structure, homotetramer. Requires Mg(2+) as cofactor.

It catalyses the reaction dGTP + H2O = 2'-deoxyguanosine + triphosphate + H(+). Its function is as follows. dGTPase preferentially hydrolyzes dGTP over the other canonical NTPs. The polypeptide is Deoxyguanosinetriphosphate triphosphohydrolase (Escherichia coli O157:H7).